Consider the following 332-residue polypeptide: Methionyl-tRNA formyltransferase (332 aa).

114–117 (SLLP) serves as a coordination point for (6S)-5,6,7,8-tetrahydrofolate.

It belongs to the Fmt family.

The enzyme catalyses L-methionyl-tRNA(fMet) + (6R)-10-formyltetrahydrofolate = N-formyl-L-methionyl-tRNA(fMet) + (6S)-5,6,7,8-tetrahydrofolate + H(+). Its function is as follows. Attaches a formyl group to the free amino group of methionyl-tRNA(fMet). The formyl group appears to play a dual role in the initiator identity of N-formylmethionyl-tRNA by promoting its recognition by IF2 and preventing the misappropriation of this tRNA by the elongation apparatus. This chain is Methionyl-tRNA formyltransferase, found in Corynebacterium aurimucosum (strain ATCC 700975 / DSM 44827 / CIP 107346 / CN-1) (Corynebacterium nigricans).